The primary structure comprises 203 residues: Ribosome maturation factor RimP (203 aa).

Residues 1–21 (MSDSEATTSTDRSESNSTATI) are compositionally biased toward polar residues. Positions 1–23 (MSDSEATTSTDRSESNSTATIHN) are disordered.

The protein belongs to the RimP family.

Its subcellular location is the cytoplasm. Required for maturation of 30S ribosomal subunits. This is Ribosome maturation factor RimP from Paenarthrobacter aurescens (strain TC1).